The following is a 275-amino-acid chain: 4-hydroxy-tetrahydrodipicolinate reductase (275 aa).

Residues 13-18 (GAGGKM) and 108-110 (GTT) contribute to the NAD(+) site. Histidine 164 functions as the Proton donor/acceptor in the catalytic mechanism. Histidine 165 contacts (S)-2,3,4,5-tetrahydrodipicolinate. Lysine 168 functions as the Proton donor in the catalytic mechanism. 174–175 (GT) is a (S)-2,3,4,5-tetrahydrodipicolinate binding site.

It belongs to the DapB family.

The protein resides in the cytoplasm. The catalysed reaction is (S)-2,3,4,5-tetrahydrodipicolinate + NAD(+) + H2O = (2S,4S)-4-hydroxy-2,3,4,5-tetrahydrodipicolinate + NADH + H(+). The enzyme catalyses (S)-2,3,4,5-tetrahydrodipicolinate + NADP(+) + H2O = (2S,4S)-4-hydroxy-2,3,4,5-tetrahydrodipicolinate + NADPH + H(+). It functions in the pathway amino-acid biosynthesis; L-lysine biosynthesis via DAP pathway; (S)-tetrahydrodipicolinate from L-aspartate: step 4/4. In terms of biological role, catalyzes the conversion of 4-hydroxy-tetrahydrodipicolinate (HTPA) to tetrahydrodipicolinate. The sequence is that of 4-hydroxy-tetrahydrodipicolinate reductase from Picosynechococcus sp. (strain ATCC 27264 / PCC 7002 / PR-6) (Agmenellum quadruplicatum).